A 693-amino-acid polypeptide reads, in one-letter code: Polyribonucleotide nucleotidyltransferase (693 aa).

Mg(2+)-binding residues include aspartate 486 and aspartate 492. The region spanning proline 553–isoleucine 612 is the KH domain. The S1 motif domain maps to glycine 622–lysine 690.

This sequence belongs to the polyribonucleotide nucleotidyltransferase family. As to quaternary structure, component of the RNA degradosome, which is a multiprotein complex involved in RNA processing and mRNA degradation. Requires Mg(2+) as cofactor.

It is found in the cytoplasm. It catalyses the reaction RNA(n+1) + phosphate = RNA(n) + a ribonucleoside 5'-diphosphate. Functionally, involved in mRNA degradation. Catalyzes the phosphorolysis of single-stranded polyribonucleotides processively in the 3'- to 5'-direction. The protein is Polyribonucleotide nucleotidyltransferase of Thioalkalivibrio sulfidiphilus (strain HL-EbGR7).